Consider the following 665-residue polypeptide: LisH domain-containing protein ARMC9 (665 aa).

One can recognise a LisH domain in the interval 7–39 (HESELLGLVKEYLDFAEFEDTLKTFSKECKIKG). Residues 201–235 (ENGQSNKEMLQQLHQQLVEAERRSMTYLKRYNKIQ) adopt a coiled-coil conformation. Position 582 is a phosphoserine (Ser582). The interval 642–665 (VQWSGDEPLQRPVTPGGHRNGYPV) is disordered.

In terms of assembly, interacts with TOGARAM1, CCDC66, CEP104, CSPP1 and CEP290. Interacts with NDUFAF2.

It localises to the cytoplasm. The protein resides in the cytoskeleton. The protein localises to the cilium basal body. Its subcellular location is the cell projection. It is found in the cilium. It localises to the microtubule organizing center. The protein resides in the centrosome. The protein localises to the centriole. Involved in ciliogenesis. It is required for appropriate acetylation and polyglutamylation of ciliary microtubules, and regulation of cilium length. Acts as a positive regulator of hedgehog (Hh)signaling. May participate in the trafficking and/or retention of GLI2 and GLI3 proteins at the ciliary tip. This is LisH domain-containing protein ARMC9 (ARMC9) from Pongo abelii (Sumatran orangutan).